The sequence spans 199 residues: Streptomycin biosynthesis protein StrG (199 aa).

Its pathway is antibiotic biosynthesis; streptomycin biosynthesis. In terms of biological role, may be involved in the formation of N-methyl-L-glucosamine. This chain is Streptomycin biosynthesis protein StrG (strG), found in Streptomyces griseus.